The primary structure comprises 418 residues: uncharacterized protein (418 aa).

The next 10 helical transmembrane spans lie at 51-71 (FVMA…GALV), 79-99 (ALVV…PLFA), 110-130 (VTGI…LGAV), 163-183 (FFGP…SVLA), 224-244 (VIFG…LPLV), 258-278 (ALMS…AYVV), 289-309 (PIFL…TLSD), 315-335 (VGVQ…FPLV), 356-376 (ATGI…VVAG), and 379-399 (AAFM…LVAM).

The protein belongs to the major facilitator superfamily.

The protein resides in the cell membrane. This is an uncharacterized protein from Mycobacterium tuberculosis (strain CDC 1551 / Oshkosh).